We begin with the raw amino-acid sequence, 297 residues long: DNA processing protein DprA (297 aa).

This sequence belongs to the DprA/Smf family. Interacts with RecA. Interacts with ComFA and ComFC.

The protein localises to the cytoplasm. Functionally, protein that helps load RecA onto ssDNA during transformation. Binds cooperatively to circular ssDNA, is able to bridge different segments of DNA. Favors the loading of RecA onto SsbA- or SsbB-coated ssDNA and formation of RecA-DNA filaments. RecA-ATP cannot catalyze homologous DNA strand exchange; SsbA and DprA activate strand exchange by RecA-ATP. The chain is DNA processing protein DprA from Bacillus subtilis (strain 168).